A 125-amino-acid chain; its full sequence is Sulfiredoxin, chloroplastic/mitochondrial (125 aa).

A chloroplast and mitochondrion-targeting transit peptide spans Met1–Ser22.

Belongs to the sulfiredoxin family. Low expression in photosynthetic tissues such as leaves and sepals.

It is found in the plastid. It localises to the chloroplast. Its subcellular location is the mitochondrion. The catalysed reaction is S-hydroxy-S-oxy-L-cysteinyl-[peroxiredoxin] + [protein]-dithiol + ATP = S-hydroxy-L-cysteinyl-[peroxiredoxin] + [protein]-disulfide + ADP + phosphate. Contributes to oxidative stress resistance by reducing cysteine-sulfinic acid formed under exposure to oxidants in a peroxiredoxin. May catalyze the reduction in a multi-step process by acting both as a specific phosphotransferase and a thioltransferase. Required to switch on the antioxidant pathway to regenerate the oxidative damage. In mitochondrion, catalyzes the retroreduction of the inactive sulfinic form of atypical Prx IIF using thioredoxin as reducing agent. The sequence is that of Sulfiredoxin, chloroplastic/mitochondrial (SRX) from Arabidopsis thaliana (Mouse-ear cress).